The following is a 268-amino-acid chain: Putative esterase/lipase 2 (268 aa).

The active site involves His-29. The active-site Charge relay system is the Ser-98.

This sequence belongs to the lipase/esterase LIP3/BchO family.

This is Putative esterase/lipase 2 from Mycoplasma genitalium (strain ATCC 33530 / DSM 19775 / NCTC 10195 / G37) (Mycoplasmoides genitalium).